Here is a 282-residue protein sequence, read N- to C-terminus: MADGEICRCQVTDPPLIRHEDYDCTARMVQKRIEIGPLGVLLNLNMLFHMSRVRHTDVYPCLNNIMSVSVSLDVPVSSGVGVGRARVLIFTTSRERVGIFHGWQVVPGCFLNAPCYSGVDVLSDELCEANIINTSVSSVAMFNRSYKPEDVWILLLTSSTCYGYHDVVVDIEQCTLPSNIDGCVHCSGVCYFNDNHCFCGRRDSNPSNPPCFQFIKDCNELYGTNETKQFICDLVGDANLDSVNTLTKEGWRRFCDVLWNTTYGDVESRTFARFLWFVFYHD.

This is RNA-4 uncharacterized 31.9 kDa protein from Beta macrocarpa (Beet).